A 593-amino-acid polypeptide reads, in one-letter code: MGKIQELSPELINQIAAGEVIESAHSVVKELMENSMDASATQVDVESKDGGLSLLRITDNGTGIEPEDLEPALKRHATSKIQDYKDLESVLSYGFRGEALASIASVSRLTLESGTKEQKTAWKTRSVAGKISEKEEIPGFIGTKILVEELFFNTPVRRKFLKSIRSEDKKIRDRVTTQALAREDVRFRLFQDGKEVFVLPTRENKKERIIDLFGENFRDHLLEVSLERGGIQATGYISDPDFYKSNRTGQFIFINGRPIEIKYSSVLLKKAYDELLPPNGHPYCFLFFEIDPSRVDVNVHPAKREIRFLDEDGFNGFFLALIQKELRSSTPVSFLELKKRLLKPAPETHSTTSFYQARSSGKNPLLGRELFSGVSKQEGFELDRMGPGVSLSELTDERVKHSSFVPKKHFGVLFETFILAEAEDGFYIIDQHTAHERIRYEEVLRKLEKRNYGIQPLLTPIRIDVSKQEQEDILNRKKEYEEVGIFLDPLGEDSIVLREIPAYMEPGQEKEIVLDFLNRTEGKETSEPELYDLMAKCVACRSAIKKGDQLSDPILAEILNRLSYCENPSRCPHGRPTLVKLSRDDLERMFHRK.

This sequence belongs to the DNA mismatch repair MutL/HexB family.

This protein is involved in the repair of mismatches in DNA. It is required for dam-dependent methyl-directed DNA mismatch repair. May act as a 'molecular matchmaker', a protein that promotes the formation of a stable complex between two or more DNA-binding proteins in an ATP-dependent manner without itself being part of a final effector complex. The sequence is that of DNA mismatch repair protein MutL from Leptospira interrogans serogroup Icterohaemorrhagiae serovar copenhageni (strain Fiocruz L1-130).